A 423-amino-acid chain; its full sequence is Type II methyltransferase M.BamHI (423 aa).

A compositionally biased stretch (basic and acidic residues) spans Asp-397–Asn-414. The segment at Asp-397–Glu-423 is disordered.

This sequence belongs to the N(4)/N(6)-methyltransferase family.

It carries out the reaction a 2'-deoxycytidine in DNA + S-adenosyl-L-methionine = an N(4)-methyl-2'-deoxycytidine in DNA + S-adenosyl-L-homocysteine + H(+). In terms of biological role, a beta subtype methylase, recognizes the double-stranded sequence 5'-GGATCC-3', methylates C-5 on both strands, and protects the DNA from cleavage by the BamHI endonuclease. In Bacillus amyloliquefaciens (Bacillus velezensis), this protein is Type II methyltransferase M.BamHI.